The following is a 374-amino-acid chain: Pulmonary surfactant-associated protein D (374 aa).

The first 19 residues, 1 to 19 (MLHFLSMLVLLVQPLGDLG), serve as a signal peptide directing secretion. S-nitrosocysteine occurs at positions 34 and 39. The disordered stretch occupies residues 40-221 (SPTENGLPGR…RGIKGESGLP (182 aa)). The 177-residue stretch at 45 to 221 (GLPGRDGRDG…RGIKGESGLP (177 aa)) folds into the Collagen-like domain. The segment covering 49 to 64 (RDGRDGREGPRGEKGD) has biased composition (basic and acidic residues). Pro-77 is subject to Hydroxyproline. Lys-86 is subject to 5-hydroxylysine. Residue Asn-89 is glycosylated (N-linked (GlcNAc...) asparagine). Pro-95 carries the post-translational modification Hydroxyproline. Lys-98 carries the 5-hydroxylysine modification. A Phosphoserine modification is found at Ser-109. 2 stretches are compositionally biased toward low complexity: residues 137–163 (KGEA…PAGP) and 170–200 (PGEQ…RGPP). A hydroxyproline mark is found at Pro-170 and Pro-176. Residues 203-215 (KGDRGAPGDRGIK) show a composition bias toward basic and acidic residues. A coiled-coil region spans residues 222 to 253 (DSAALRQQMEALNGKLQRLEAAFSRYKKAALF). Positions 259-374 (VGDKIFRAAN…GEQRLVICEF (116 aa)) constitute a C-type lectin domain. 2 disulfides stabilise this stretch: Cys-280-Cys-372 and Cys-350-Cys-364.

Belongs to the SFTPD family. Oligomeric complex of 4 set of homotrimers. Post-translationally, S-nitrosylation at Cys-34 and Cys-39 alters the quaternary structure which results in a pro-inflammatory chemoattractive signaling activity with macrophages.

It localises to the secreted. The protein localises to the extracellular space. Its subcellular location is the extracellular matrix. The protein resides in the surface film. Contributes to the lung's defense against inhaled microorganisms, organic antigens and toxins. Interacts with compounds such as bacterial lipopolysaccharides, oligosaccharides and fatty acids and modulates leukocyte action in immune response. May participate in the extracellular reorganization or turnover of pulmonary surfactant. Binds strongly maltose residues and to a lesser extent other alpha-glucosyl moieties. The protein is Pulmonary surfactant-associated protein D (Sftpd) of Rattus norvegicus (Rat).